A 1637-amino-acid polypeptide reads, in one-letter code: Surface protein (1637 aa).

The first 48 residues, 1 to 48, serve as a signal peptide directing secretion; it reads MNKNSKKKLDFLPNKLNKYSIRRFTVGTASILVGATLIFGVANDQAEA. 3 disordered regions span residues 49–305, 689–719, and 739–1611; these read AENN…RTQV, VQKGEDGEKTTTTPTKVDPDTGDVVERGEPT, and PQGH…NGTL. The span at 56-65 shows a compositional bias: basic and acidic residues; it reads KQDDSSDASK. The segment covering 69–83 has biased composition (polar residues); the sequence is NVQTIEQSSANSNES. Basic and acidic residues-rich tracts occupy residues 90–106, 127–180, and 188–264; these read DVTKDTTEQASTEEKAN, EAPK…KATT, and ETSK…KVET. A compositionally biased stretch (polar residues) spans 289 to 298; it reads AKSNSNAQPS. G5 domains lie at 654–737, 783–865, 911–993, 1039–1121, and 1167–1250; these read QADL…TPEE, HGPK…GGEE, and HGPK…APEI. Basic and acidic residues predominate over residues 779–817; sequence DVTKHGPKAGEPEVTKEEIPFEKKREFNPDLKPGEEKVT. The segment covering 818–832 has biased composition (low complexity); sequence QEGQTGEKTTTTPTT. Residues 907–945 show a composition bias toward basic and acidic residues; that stretch reads DVTKHGPKAGEPEVTKEEIPFEKKREFNPDLKPGEEKVT. A compositionally biased stretch (low complexity) spans 946–960; sequence QEGQTGEKTTTTPTT. A compositionally biased stretch (basic and acidic residues) spans 1035–1073; sequence DVTKHGPKAGEPEVTKEEIPFEKKREFNPDLKPGEEKVT. The segment covering 1074–1088 has biased composition (low complexity); that stretch reads QEGQTGEKTTTTPTT. Basic and acidic residues predominate over residues 1163 to 1189; it reads DVTKHGPKAGEPEVTKEEIPYETKRVL. Composition is skewed to acidic residues over residues 1282-1291 and 1302-1580; these read TGEIIEEPQD and SDAD…DSDS. Tandem repeats lie at residues 1301 to 1302, 1303 to 1304, 1305 to 1306, 1307 to 1308, 1309 to 1310, 1311 to 1312, 1313 to 1314, 1315 to 1316, 1317 to 1318, 1319 to 1320, 1321 to 1322, 1323 to 1324, 1325 to 1326, 1327 to 1328, 1329 to 1330, 1331 to 1332, 1333 to 1334, 1335 to 1336, 1337 to 1338, 1339 to 1340, 1341 to 1342, 1343 to 1344, 1345 to 1346, 1347 to 1348, 1349 to 1350, 1351 to 1352, 1353 to 1354, 1355 to 1356, 1357 to 1358, 1359 to 1360, 1361 to 1362, 1363 to 1364, 1365 to 1366, 1367 to 1368, 1369 to 1370, 1371 to 1372, 1373 to 1374, 1375 to 1376, 1377 to 1378, 1379 to 1380, 1381 to 1382, 1383 to 1384, 1385 to 1386, 1387 to 1388, 1389 to 1390, 1391 to 1392, 1393 to 1394, 1395 to 1396, 1397 to 1398, 1399 to 1400, 1401 to 1402, 1403 to 1404, 1405 to 1406, 1407 to 1408, 1409 to 1410, 1411 to 1412, 1413 to 1414, 1415 to 1416, 1417 to 1418, 1419 to 1420, 1421 to 1422, 1423 to 1424, 1425 to 1426, 1427 to 1428, 1429 to 1430, 1431 to 1432, 1433 to 1434, 1435 to 1436, 1437 to 1438, 1439 to 1440, 1441 to 1442, 1443 to 1444, 1445 to 1446, 1447 to 1448, 1449 to 1450, 1451 to 1452, 1453 to 1454, 1455 to 1456, 1457 to 1458, 1459 to 1460, 1461 to 1462, 1463 to 1464, 1465 to 1466, 1467 to 1468, 1469 to 1470, 1471 to 1472, 1473 to 1474, 1475 to 1476, 1477 to 1478, 1479 to 1480, 1481 to 1482, 1483 to 1484, 1485 to 1486, 1487 to 1488, 1489 to 1490, 1491 to 1492, 1493 to 1494, 1495 to 1496, 1497 to 1498, 1499 to 1500, 1501 to 1502, 1503 to 1504, 1505 to 1506, 1507 to 1508, 1509 to 1510, 1511 to 1512, 1513 to 1514, 1515 to 1516, 1517 to 1518, 1519 to 1520, 1521 to 1522, 1523 to 1524, 1525 to 1526, 1527 to 1528, 1529 to 1530, 1531 to 1532, 1533 to 1534, 1535 to 1536, 1537 to 1538, 1539 to 1540, 1541 to 1542, 1543 to 1544, 1545 to 1546, 1547 to 1548, 1549 to 1550, 1551 to 1552, 1553 to 1554, 1555 to 1556, 1557 to 1558, 1559 to 1560, 1561 to 1562, 1563 to 1564, 1565 to 1566, 1567 to 1568, 1569 to 1570, 1571 to 1572, 1573 to 1574, 1575 to 1576, 1577 to 1578, 1579 to 1580, and 1581 to 1582. The segment at 1301–1582 is 141 X 2 AA tandem repeats of D-[SAG]; that stretch reads DSDADSDSDA…DSDSDSDSDA (282 aa). Over residues 1581 to 1599 the composition is skewed to basic and acidic residues; the sequence is DADRDHNDKTDKPNNKELP. The LPXTG sorting signal signature appears at 1598–1602; it reads LPDTG. Position 1601 is a pentaglycyl murein peptidoglycan amidated threonine (Thr-1601). A propeptide spans 1602 to 1637 (removed by sortase); the sequence is GNDAQNNGTLFGSLFAALGGLFLVGRRRKNKNNEEK.

It localises to the secreted. It is found in the cell wall. In terms of biological role, could have a role in preventing adhesion at some stages during an infection. The polypeptide is Surface protein (pls) (Staphylococcus aureus).